Consider the following 290-residue polypeptide: 4-hydroxybenzoate octaprenyltransferase (290 aa).

Transmembrane regions (helical) follow at residues 40-60, 99-119, 120-140, 142-162, 165-185, 215-235, 239-259, and 267-287; these read IAGAGTPSLTVIVVFFLGVVI, LALFGGLGLLAFGLVLFLNEL, TFWLSFGGLGLAVLYPFTKRF, FMPQLFLGAAFSWAIPMAFAA, GEVPEIAWLLYVANVLWTVAY, LMIAILQALTLLALIMVGHRL, WPWYAGLVGMSLSFAFQHSLI, and SFHAFLNNHWAGACVFIGLYF.

This sequence belongs to the UbiA prenyltransferase family. Mg(2+) is required as a cofactor.

The protein resides in the cell inner membrane. The enzyme catalyses all-trans-octaprenyl diphosphate + 4-hydroxybenzoate = 4-hydroxy-3-(all-trans-octaprenyl)benzoate + diphosphate. It participates in cofactor biosynthesis; ubiquinone biosynthesis. In terms of biological role, catalyzes the prenylation of para-hydroxybenzoate (PHB) with an all-trans polyprenyl group. Mediates the second step in the final reaction sequence of ubiquinone-8 (UQ-8) biosynthesis, which is the condensation of the polyisoprenoid side chain with PHB, generating the first membrane-bound Q intermediate 3-octaprenyl-4-hydroxybenzoate. The sequence is that of 4-hydroxybenzoate octaprenyltransferase from Alcanivorax borkumensis (strain ATCC 700651 / DSM 11573 / NCIMB 13689 / SK2).